A 496-amino-acid polypeptide reads, in one-letter code: Aminoacetaldehyde dehydrogenase (496 aa).

NADH-binding residues include Leu-166, Trp-168, Lys-192, Ser-246, Thr-249, and Tyr-256. Residue Glu-268 is the Proton acceptor of the active site. Residue Cys-269 participates in NADH binding. Cys-303 serves as the catalytic Nucleophile. The NADH site is built by Lys-353 and Glu-398.

The protein belongs to the aldehyde dehydrogenase family. Homotetramer, formed by two symmetrical dimers.

The enzyme catalyses aminoacetaldehyde + NAD(+) + H2O = glycine + NADH + 2 H(+). The catalysed reaction is 3-aminopropanal + NAD(+) + H2O = beta-alanine + NADH + 2 H(+). NAD(+)-dependent aminoaldehyde dehydrogenase highly efficient with protonated aminoacetaldehyde (ACTAL) and 3-aminopropanaldehyde (APAL). Likely participates in a still uncharacterized metabolic pathway present in proteobacteria species, in which ACTAL might be an intermediate, yielding glycine. Highly prefers NAD(+) over NADP(+). Shows very poor activity with acetaldehyde, propanaldehyde, butanaldehyde, pentanaldehyde, dimethylaminoacetaldehyde, trimethylaminoacetaldehyde (betaine aldehyde), trimethylaminobutanaldehyde, short aliphatic hydroxyaldehydes such as 3-hydroxypropanaldehyde and 2-hydroxypropanaldehyde (lactaldehyde), and aromatic aldehydes. The polypeptide is Aminoacetaldehyde dehydrogenase (Pseudomonas aeruginosa (strain ATCC 15692 / DSM 22644 / CIP 104116 / JCM 14847 / LMG 12228 / 1C / PRS 101 / PAO1)).